The chain runs to 576 residues: CTP synthase (576 aa).

The Glutamine amidotransferase type-1 domain occupies 305 to 559 (QIALVGKYTH…LGLVAAAANI (255 aa)). Residues Cys-404, His-535, and Glu-537 each act as for GATase activity in the active site.

It belongs to the CTP synthase family.

The catalysed reaction is UTP + L-glutamine + ATP + H2O = CTP + L-glutamate + ADP + phosphate + 2 H(+). Its pathway is pyrimidine metabolism; CTP biosynthesis via de novo pathway; CTP from UDP: step 2/2. Its function is as follows. Catalyzes the ATP-dependent amination of UTP to CTP with either L-glutamine or ammonia as the source of nitrogen. In Eremothecium gossypii (strain ATCC 10895 / CBS 109.51 / FGSC 9923 / NRRL Y-1056) (Yeast), this protein is CTP synthase (URA7).